The following is a 198-amino-acid chain: Endonuclease V (198 aa).

D38 and D101 together coordinate Mg(2+).

It belongs to the endonuclease V family. The cofactor is Mg(2+).

It localises to the cytoplasm. It catalyses the reaction Endonucleolytic cleavage at apurinic or apyrimidinic sites to products with a 5'-phosphate.. DNA repair enzyme involved in the repair of deaminated bases. Selectively cleaves double-stranded DNA at the second phosphodiester bond 3' to a deoxyinosine leaving behind the intact lesion on the nicked DNA. The sequence is that of Endonuclease V from Saccharolobus islandicus (strain M.14.25 / Kamchatka #1) (Sulfolobus islandicus).